A 528-amino-acid chain; its full sequence is Phosphoenolpyruvate carboxykinase (ATP) (528 aa).

Arg56, Tyr192, and Lys198 together coordinate substrate. Residues Lys198, His217, and 233–241 (GLSGTGKTT) each bind ATP. 2 residues coordinate Mn(2+): Lys198 and His217. A Mn(2+)-binding site is contributed by Asp254. Residues Glu282, Arg319, and Thr444 each contribute to the ATP site. Residue Arg319 participates in substrate binding.

It belongs to the phosphoenolpyruvate carboxykinase (ATP) family. It depends on Mn(2+) as a cofactor.

The protein localises to the cytoplasm. It catalyses the reaction oxaloacetate + ATP = phosphoenolpyruvate + ADP + CO2. It participates in carbohydrate biosynthesis; gluconeogenesis. Its function is as follows. Involved in the gluconeogenesis. Catalyzes the conversion of oxaloacetate (OAA) to phosphoenolpyruvate (PEP) through direct phosphoryl transfer between the nucleoside triphosphate and OAA. This Bacillus cereus (strain 03BB102) protein is Phosphoenolpyruvate carboxykinase (ATP).